The following is a 201-amino-acid chain: Peptide deformylase (201 aa).

Residues 1-21 (MANHFSQLAKKSRTNGNAEKI) form a disordered region. The Fe cation site is built by cysteine 121 and histidine 163. Glutamate 164 is an active-site residue. Residue histidine 167 participates in Fe cation binding.

The protein belongs to the polypeptide deformylase family. The cofactor is Fe(2+).

The catalysed reaction is N-terminal N-formyl-L-methionyl-[peptide] + H2O = N-terminal L-methionyl-[peptide] + formate. Functionally, removes the formyl group from the N-terminal Met of newly synthesized proteins. Requires at least a dipeptide for an efficient rate of reaction. N-terminal L-methionine is a prerequisite for activity but the enzyme has broad specificity at other positions. This Prochlorococcus marinus (strain AS9601) protein is Peptide deformylase.